Here is a 422-residue protein sequence, read N- to C-terminus: O-mycaminosyltylonolide 6-deoxyallosyltransferase (422 aa).

This sequence belongs to the glycosyltransferase 28 family.

It catalyses the reaction 5-O-beta-D-mycaminosyltylonolide + dTDP-6-deoxy-alpha-D-allose = demethyllactenocin + dTDP + H(+). Functionally, involved in the biosynthesis of the macrolide antibiotic tylosin derived from the polyketide lactone tylactone. Catalyzes the transfer of 6-deoxy-alpha-D-allose from dTDP-6-deoxy-alpha-D-allose to O-mycaminosyltylonolide (OMT) to yield demethyllactenocin. The sequence is that of O-mycaminosyltylonolide 6-deoxyallosyltransferase from Streptomyces fradiae (Streptomyces roseoflavus).